We begin with the raw amino-acid sequence, 196 residues long: Probable GTP-binding protein EngB (196 aa).

Residues 21–195 form the EngB-type G domain; sequence DVSEICLIGR…YELIDKLLGS (175 aa). GTP-binding positions include 29–36, 56–60, 75–78, 142–145, and 174–176; these read GRSNVGKS, GKTRL, DAPG, TKLD, and ISN. Mg(2+) contacts are provided by Ser-36 and Thr-58.

It belongs to the TRAFAC class TrmE-Era-EngA-EngB-Septin-like GTPase superfamily. EngB GTPase family. It depends on Mg(2+) as a cofactor.

Necessary for normal cell division and for the maintenance of normal septation. The protein is Probable GTP-binding protein EngB of Mycoplasma mycoides subsp. mycoides SC (strain CCUG 32753 / NCTC 10114 / PG1).